A 245-amino-acid chain; its full sequence is MDDASTLIDVKEYPDTEVQKNRVLTLEEWREKWVDGKIGFHQEQGHQLLKKHLDTFLKGKNVLRVFFPLCGKAVEMKWFADRGHCVVGVEISELGIREFFTEQNLSYSEEPIMEIPGAKVFKSSSGNISLYCCNLFDLPRVNIGKFDRIWDRGALVAVNPGDRKCYTDIMLSLTRKGFRYLLAVLSYDPTKHPGPPFYVPDAEIKNLFGSTCNIHCLEKVDVFEERHKSWGIDYIVEKLYLLTEK.

W29 to F40 is a binding site for S-adenosyl-L-methionine. F40 lines the substrate pocket. An N6-acetyllysine modification is found at K58. The S-adenosyl-L-methionine site is built by L69, E90, and R152.

This sequence belongs to the class I-like SAM-binding methyltransferase superfamily. TPMT family. Monomer.

It is found in the cytoplasm. It catalyses the reaction S-adenosyl-L-methionine + a thiopurine = S-adenosyl-L-homocysteine + a thiopurine S-methylether.. This chain is Thiopurine S-methyltransferase (TPMT), found in Panthera leo (Lion).